Reading from the N-terminus, the 513-residue chain is ATP synthase subunit alpha (513 aa).

169–176 (GDRQTGKT) lines the ATP pocket.

The protein belongs to the ATPase alpha/beta chains family. F-type ATPases have 2 components, CF(1) - the catalytic core - and CF(0) - the membrane proton channel. CF(1) has five subunits: alpha(3), beta(3), gamma(1), delta(1), epsilon(1). CF(0) has three main subunits: a(1), b(2) and c(9-12). The alpha and beta chains form an alternating ring which encloses part of the gamma chain. CF(1) is attached to CF(0) by a central stalk formed by the gamma and epsilon chains, while a peripheral stalk is formed by the delta and b chains.

It localises to the cell inner membrane. The catalysed reaction is ATP + H2O + 4 H(+)(in) = ADP + phosphate + 5 H(+)(out). Functionally, produces ATP from ADP in the presence of a proton gradient across the membrane. The alpha chain is a regulatory subunit. The sequence is that of ATP synthase subunit alpha from Shewanella denitrificans (strain OS217 / ATCC BAA-1090 / DSM 15013).